Here is a 331-residue protein sequence, read N- to C-terminus: MVRLILEHTLQGHKGRIWGVAWHPKGNSFASCGEDKAIRIWSLSGNTWTTKTILSDGHKRTIREVRWSPCGEYLASASFDATTAIWSKHECTATLEGHENEVKSVSWSRSGGLLATCSRDKSVWIWEVAGDDEFECAAVLNAHSQDVKRVVWHPTKEVLASASYDNTIKMFAESALDSDWDCTATLSSHTSTVWSIDFDADGERLVSCSDDATLKIWRAYHPGNDAGIATPDKTTVWKCVCTLSGEHSRAIYDVSWCKQTGLIASACGDDGIRIFKECSDSKRDAPTFELLTAEESAHEQDVNAVEWNPVTAGQLISCSDDGTIKIWKLQE.

7 WD repeats span residues 12 to 51 (GHKGRIWGVAWHPKGNSFASCGEDKAIRIWSLSGNTWTTK), 57 to 96 (GHKRTIREVRWSPCGEYLASASFDATTAIWSKHECTATLE), 97 to 136 (GHENEVKSVSWSRSGGLLATCSRDKSVWIWEVAGDDEFEC), 142 to 181 (AHSQDVKRVVWHPTKEVLASASYDNTIKMFAESALDSDWD), 188 to 227 (SHTSTVWSIDFDADGERLVSCSDDATLKIWRAYHPGNDAG), 246 to 285 (EHSRAIYDVSWCKQTGLIASACGDDGIRIFKECSDSKRDA), and 297 to 331 (AHEQDVNAVEWNPVTAGQLISCSDDGTIKIWKLQE).

Belongs to the WD repeat CIA1 family.

Its function is as follows. Essential component of the cytosolic iron-sulfur (Fe/S) protein assembly machinery. Required for the maturation of extramitochondrial Fe/S proteins. The sequence is that of Probable cytosolic iron-sulfur protein assembly protein Ciao1 from Drosophila virilis (Fruit fly).